Consider the following 297-residue polypeptide: HTH-type transcriptional regulator ArgP (297 aa).

One can recognise an HTH lysR-type domain in the interval 4–60; it reads PDYRTLQALDAVIRERGFERAAQKLCITQSAVSQRIKQLENLFGQPLLVRTIPPRPT. A DNA-binding region (H-T-H motif) is located at residues 21-40; it reads FERAAQKLCITQSAVSQRIK.

The protein belongs to the LysR transcriptional regulatory family. In terms of assembly, homodimer.

Its function is as follows. Controls the transcription of genes involved in arginine and lysine metabolism. The sequence is that of HTH-type transcriptional regulator ArgP from Pectobacterium atrosepticum (strain SCRI 1043 / ATCC BAA-672) (Erwinia carotovora subsp. atroseptica).